The following is a 472-amino-acid chain: Transcription factor TGAL1 (472 aa).

Residues 136–190 (WGESTIADTSPRTDTSTDPDTDERNQMFEQGQLAAPTASDSSDRSKDKLDHKTLR) form a disordered region. Over residues 143 to 153 (DTSPRTDTSTD) the composition is skewed to low complexity. A compositionally biased stretch (basic and acidic residues) spans 176–187 (SSDRSKDKLDHK). Residues 185–229 (DHKTLRRLAQNREAARKSRLRKKAYIQNLESSRLKLTQIEQELQR) enclose the bZIP domain. The segment at 187-207 (KTLRRLAQNREAARKSRLRKK) is basic motif. The segment at 213–227 (LESSRLKLTQIEQEL) is leucine-zipper. A DOG1 domain is found at 252-469 (ALAFDMEYAR…RALSSLWLAR (218 aa)).

Belongs to the bZIP family. In terms of assembly, isoforms 1 and 2 interact with NPR2/NH2. Isoform 2 interacts with NPR1/NH1 and NPR3/NH3.

It localises to the nucleus. In terms of biological role, transcriptional regulator involved in defense response. This is Transcription factor TGAL1 from Oryza sativa subsp. japonica (Rice).